We begin with the raw amino-acid sequence, 177 residues long: Large ribosomal subunit protein uL6 (177 aa).

Belongs to the universal ribosomal protein uL6 family. Part of the 50S ribosomal subunit.

Functionally, this protein binds to the 23S rRNA, and is important in its secondary structure. It is located near the subunit interface in the base of the L7/L12 stalk, and near the tRNA binding site of the peptidyltransferase center. This chain is Large ribosomal subunit protein uL6, found in Paracidovorax citrulli (strain AAC00-1) (Acidovorax citrulli).